A 181-amino-acid polypeptide reads, in one-letter code: Acireductone dioxygenase (181 aa).

The Fe(2+) site is built by histidine 97, histidine 99, glutamate 103, and histidine 141. Positions 97, 99, 103, and 141 each coordinate Ni(2+).

The protein belongs to the acireductone dioxygenase (ARD) family. Monomer. Fe(2+) serves as cofactor. It depends on Ni(2+) as a cofactor.

The catalysed reaction is 1,2-dihydroxy-5-(methylsulfanyl)pent-1-en-3-one + O2 = 3-(methylsulfanyl)propanoate + CO + formate + 2 H(+). It catalyses the reaction 1,2-dihydroxy-5-(methylsulfanyl)pent-1-en-3-one + O2 = 4-methylsulfanyl-2-oxobutanoate + formate + 2 H(+). It participates in amino-acid biosynthesis; L-methionine biosynthesis via salvage pathway; L-methionine from S-methyl-5-thio-alpha-D-ribose 1-phosphate: step 5/6. Catalyzes 2 different reactions between oxygen and the acireductone 1,2-dihydroxy-3-keto-5-methylthiopentene (DHK-MTPene) depending upon the metal bound in the active site. Fe-containing acireductone dioxygenase (Fe-ARD) produces formate and 2-keto-4-methylthiobutyrate (KMTB), the alpha-ketoacid precursor of methionine in the methionine recycle pathway. Ni-containing acireductone dioxygenase (Ni-ARD) produces methylthiopropionate, carbon monoxide and formate, and does not lie on the methionine recycle pathway. The polypeptide is Acireductone dioxygenase (Pseudomonas fluorescens (strain ATCC BAA-477 / NRRL B-23932 / Pf-5)).